The primary structure comprises 433 residues: Glutamyl-tRNA reductase (433 aa).

Residues 49–52 (TCNR), S114, 119–121 (EPQ), and Q125 contribute to the substrate site. The active-site Nucleophile is the C50. 201–206 (GAGETI) is a binding site for NADP(+).

This sequence belongs to the glutamyl-tRNA reductase family. Homodimer.

It catalyses the reaction (S)-4-amino-5-oxopentanoate + tRNA(Glu) + NADP(+) = L-glutamyl-tRNA(Glu) + NADPH + H(+). It participates in porphyrin-containing compound metabolism; protoporphyrin-IX biosynthesis; 5-aminolevulinate from L-glutamyl-tRNA(Glu): step 1/2. In terms of biological role, catalyzes the NADPH-dependent reduction of glutamyl-tRNA(Glu) to glutamate 1-semialdehyde (GSA). This chain is Glutamyl-tRNA reductase, found in Histophilus somni (strain 2336) (Haemophilus somnus).